A 432-amino-acid chain; its full sequence is Alpha-ketoglutarate permease (432 aa).

The Cytoplasmic segment spans residues 1–32 (MAESTVTADSKLTSSDTRRRIWAIVGASSGNL). A helical transmembrane segment spans residues 33 to 53 (VEWFDFYVYSFCSLYFAHIFF). Over 54 to 62 (PSGNTTTQL) the chain is Periplasmic. The chain crosses the membrane as a helical span at residues 63 to 83 (LQTAGVFAAGFLMRPIGGWLF). The Cytoplasmic portion of the chain corresponds to 84 to 95 (GRIADKHGRKKS). A helical membrane pass occupies residues 96 to 116 (MLLSVCMMCFGSLVIACLPGY). Residues 117–118 (ET) lie on the Periplasmic side of the membrane. Residues 119–139 (IGTWAPALLLLARLFQGLSVG) form a helical membrane-spanning segment. Residues 140–162 (GEYGTSATYMSEVAVEGRKGFYA) are Cytoplasmic-facing. Residues 163–183 (SFQYVTLIGGQLLALLVVVVL) form a helical membrane-spanning segment. Over 184–193 (QHTMEDAALR) the chain is Periplasmic. The helical transmembrane segment at 194–214 (EWGWRIPFALGAVLAVVALWL) threads the bilayer. Residues 215–243 (RRQLDETSQQETRALKEAGSLKGLWRNRR) are Cytoplasmic-facing. Residues 244 to 264 (AFIMVLGFTAAGSLCFYTFTT) traverse the membrane as a helical segment. The Periplasmic portion of the chain corresponds to 265–279 (YMQKYLVNTAGMHAN). A helical transmembrane segment spans residues 280-300 (VASGIMTAALFVFMLIQPLIG). Topologically, residues 301-309 (ALSDKIGRR) are cytoplasmic. The helical transmembrane segment at 310 to 330 (TSMLCFGSLAAIFTVPILSAL) threads the bilayer. The Periplasmic segment spans residues 331–339 (QNVSSPYAA). Residues 340–360 (FGLVMCALLIVSFYTSISGIL) form a helical membrane-spanning segment. Residues 361–373 (KAEMFPAQVRALG) are Cytoplasmic-facing. A helical transmembrane segment spans residues 374 to 394 (VGLSYAVANAIFGGSAEYVAL). Residues 395 to 402 (SLKSIGME) lie on the Periplasmic side of the membrane. Residues 403 to 423 (TAFFWYVTLMAVVAFLVSLML) form a helical membrane-spanning segment. Residues 424–432 (HRKGKGMRL) are Cytoplasmic-facing.

The protein belongs to the major facilitator superfamily. Metabolite:H+ Symporter (MHS) family (TC 2.A.1.6) family.

It is found in the cell inner membrane. In terms of biological role, uptake of alpha-ketoglutarate across the boundary membrane with the concomitant import of a cation (symport system). The protein is Alpha-ketoglutarate permease (kgtP) of Escherichia coli (strain K12).